The chain runs to 199 residues: Large ribosomal subunit protein uL4 (199 aa).

The protein belongs to the universal ribosomal protein uL4 family. Part of the 50S ribosomal subunit.

In terms of biological role, one of the primary rRNA binding proteins, this protein initially binds near the 5'-end of the 23S rRNA. It is important during the early stages of 50S assembly. It makes multiple contacts with different domains of the 23S rRNA in the assembled 50S subunit and ribosome. Its function is as follows. Forms part of the polypeptide exit tunnel. The chain is Large ribosomal subunit protein uL4 from Aquifex pyrophilus.